The following is a 923-amino-acid chain: MAPKPPKSPKGQKKGKKNMKQQLLVPEEEEPMNMESMGHPEIYPLVLTTKTQEIFNCRVDEDMTDEQTYKLIKKEDILADLQNRAAVSDFHPVKKIVREYPGEELLLVYDKDFKYGLNFYLIGTEDGKENFLKPPEVPEEQEEPKEHVQEDVYVYNPPVSKPWVSLGSEKEIEEESVQESGKRVTYMISRKRSEFGAPVTFSDQNASSVKDAYIECTSYPEKNYTLSQVEKDVGLQVIAEVKDTSTQTKWAFPKNATTQYYPREFSEEEKSLIGKSKSLVDFFNNVSTSVEVALQQNEIMNTFIDDWKNLAEEESTFGDKTDTHLKEYQSFTDLHNTMEKMITCVSWHPTIFGLIVVSVAVRLSYEERVQNSGRLLLQPSLLLFWSFSDPIHPQLMLESPDDIFCFEFCPSDPNIIAGGCINGQIVLWDITAHADRIENIKTGGHRSKKTSLKPMFLLEPDSNKESMYIRHCAVSSIENGHRKVITDIHWLPDSFEINRMGSVFENRSGINCQLVTCSADCTICFWDIRPQKPAVTAAAAASAATTATNNANSQQSPVEKKKEENIDIPFDVPSTFLHLDLSWKPLSRLKLSKGDTSLDHCPTKLSLGEDPFLCKIQGTSSIHIILRDKMLSQIKMVKTSEINPYQNLEAGIANILKPIEDFCTKFFVGTEEGEVIYTDWKMERDSDTGRLMAKKPVSLYTVHDGAVHTIQRSPFFNDIVLTVGGWNVAIWKEEVMTGPLLQTCCGPKRYTAGHWSLTRPGVFYIGREDGNVDIWDLLEKTHEPAQSQNICITMITYIKPWTFSSKQQFIAVADYYGTLHILEIPWTLSHPSLNEVSSVNYYFEREVRHLEYVQQRKEIREQEKIDMALELVKKKAKIYQKTKEQMEAELKLEYESYLDLEKSVLFALGLSKVSEKKSYLDSH.

Positions 1–35 (MAPKPPKSPKGQKKGKKNMKQQLLVPEEEEPMNME) are disordered. Positions 10 to 19 (KGQKKGKKNM) are enriched in basic residues. WD repeat units follow at residues 398–438 (ESPD…DRIE), 480–536 (GHRK…PAVT), 702–741 (VHDG…GPLL), and 745–785 (CGPK…HEPA). The stretch at 869 to 889 (LELVKKKAKIYQKTKEQMEAE) forms a coiled coil.

As to quaternary structure, interacts with ACTR2; this interaction reduces binding of the Arp2/3 complex to the VCA domain of nucleation promoting factors. Part of the multisubunit axonemal dynein complex formed at least of two heavy chains and a number of intermediate and light chains. Found in a associated with the catalytic heavy chain DNAH2, the intermediate chain DNAI4, and the light chain DYNLT1. In terms of tissue distribution, strongly expressed in the testes. Detected also in brain and lung tissues.

Its subcellular location is the cytoplasm. Its function is as follows. Acts as a negative regulator of cell migration, invasion, and metastasis downstream of p53/TP53, through inhibition of Arp2/3 complex-mediated actin polymerization. Via its association with the multisubunit axonemal dynein complex, is potentially involved in the regulation of cilia function. May play a role in osteogenesis of dental tissue-derived mesenchymal stem cells. In Mus musculus (Mouse), this protein is Dynein axonemal intermediate chain 3 (Dnai3).